Here is a 363-residue protein sequence, read N- to C-terminus: Anhydro-N-acetylmuramic acid kinase (363 aa).

Residue 9–16 (GTSLDGID) coordinates ATP.

It belongs to the anhydro-N-acetylmuramic acid kinase family.

It catalyses the reaction 1,6-anhydro-N-acetyl-beta-muramate + ATP + H2O = N-acetyl-D-muramate 6-phosphate + ADP + H(+). The protein operates within amino-sugar metabolism; 1,6-anhydro-N-acetylmuramate degradation. Its pathway is cell wall biogenesis; peptidoglycan recycling. Catalyzes the specific phosphorylation of 1,6-anhydro-N-acetylmuramic acid (anhMurNAc) with the simultaneous cleavage of the 1,6-anhydro ring, generating MurNAc-6-P. Is required for the utilization of anhMurNAc either imported from the medium or derived from its own cell wall murein, and thus plays a role in cell wall recycling. The polypeptide is Anhydro-N-acetylmuramic acid kinase (Nitrosomonas europaea (strain ATCC 19718 / CIP 103999 / KCTC 2705 / NBRC 14298)).